The primary structure comprises 1692 residues: Regulating synaptic membrane exocytosis protein 1 (1692 aa).

The interval methionine 1–serine 26 is disordered. Positions glycine 9 to glutamine 20 are enriched in pro residues. In terms of domain architecture, RabBD spans leucine 22–serine 182. The FYVE-type zinc finger occupies lysine 110–glutamate 170. Cysteine 116, cysteine 119, cysteine 132, cysteine 135, cysteine 140, cysteine 143, cysteine 162, and cysteine 165 together coordinate Zn(2+). Over residues glycine 183 to glycine 199 the composition is skewed to polar residues. The segment at glycine 183–serine 555 is disordered. The span at valine 204–arginine 217 shows a compositional bias: basic and acidic residues. Low complexity predominate over residues serine 223–proline 234. The segment covering valine 305–serine 357 has biased composition (basic and acidic residues). Residues methionine 377–arginine 388 are compositionally biased toward basic residues. Positions arginine 412–alanine 430 are enriched in low complexity. The segment covering proline 462–arginine 475 has biased composition (basic and acidic residues). The span at arginine 497 to valine 509 shows a compositional bias: polar residues. Residue serine 500 is modified to Phosphoserine. Residues lysine 515–glutamine 527 are compositionally biased toward basic residues. Acidic residues predominate over residues serine 545–serine 555. Phosphoserine is present on serine 578. One can recognise a PDZ domain in the interval arginine 605 to arginine 691. The segment at arginine 698–proline 732 is disordered. Positions proline 700–serine 716 are enriched in low complexity. A phosphoserine mark is found at serine 728 and serine 731. The 124-residue stretch at leucine 742–tyrosine 865 folds into the C2 1 domain. The interval histidine 870–leucine 1013 is disordered. Serine 881 carries the post-translational modification Phosphoserine. Positions serine 935–glutamine 944 are enriched in polar residues. Serine 977 is subject to Phosphoserine. The segment covering arginine 992–aspartate 1009 has biased composition (basic and acidic residues). Position 1031 is a phosphoserine (serine 1031). 2 disordered regions span residues asparagine 1118–serine 1222 and glycine 1235–serine 1278. Basic and acidic residues-rich tracts occupy residues serine 1128–arginine 1144 and proline 1157–serine 1170. Position 1252 is a phosphoserine (serine 1252). A compositionally biased stretch (polar residues) spans serine 1252–serine 1265. Threonine 1254 bears the Phosphothreonine mark. Phosphoserine occurs at positions 1256, 1308, 1310, 1311, 1339, 1340, and 1342. 3 disordered regions span residues cysteine 1332–serine 1394, leucine 1408–lysine 1428, and arginine 1445–asparagine 1495. Residues serine 1345–serine 1366 are compositionally biased toward low complexity. Serine 1416 is subject to Phosphoserine. Basic and acidic residues predominate over residues glutamate 1477–threonine 1490. The region spanning alanine 1538 to tyrosine 1656 is the C2 2 domain. Phosphoserine is present on residues serine 1677, serine 1680, serine 1683, and serine 1692.

As to quaternary structure, binds RAB3A, RAB3B and RAB3D that have been activated by GTP-binding. Interacts with RAB3C, RAB10, RAB26 and RAB37. Binds UNC13A. Interacts with TSPOAP1 and RIMBP2. Interacts with PPFIA3 and PPFIA4. Interacts with ERC1. Binds SNAP25, SYT1 and CACNA1B. Interaction with SYT1 is enhanced by calcium ions. Interaction with SNAP25 is weaker in the presence of calcium ions. In terms of processing, phosphorylated by BRSK1. In terms of tissue distribution, expressed in melanocytes. Detected in brain and retina.

The protein resides in the cell membrane. Its subcellular location is the synapse. It is found in the presynaptic cell membrane. In terms of biological role, rab effector involved in exocytosis. May act as scaffold protein that regulates neurotransmitter release at the active zone. Essential for maintaining normal probability of neurotransmitter release and for regulating release during short-term synaptic plasticity. Plays a role in dendrite formation by melanocytes. This chain is Regulating synaptic membrane exocytosis protein 1 (RIMS1), found in Homo sapiens (Human).